Reading from the N-terminus, the 326-residue chain is UDP-N-acetylglucosamine transporter (326 aa).

8 consecutive transmembrane segments (helical) span residues 4 to 24 (NLKY…VLTM), 38 to 58 (LSST…ILLV), 136 to 156 (LGVY…FVQW), 174 to 194 (FVGL…GVYF), 212 to 232 (LGFF…GELV), 244 to 264 (LTWI…AVIK), 269 to 289 (ILKG…SYFW), and 293 to 313 (FVPT…TFLY).

It belongs to the nucleotide-sugar transporter family. SLC35A subfamily. Interacts with SLC35A2; the interaction is reduced in the presence of SLC35A4. Found in a complex with SLC35A2 and SLC35A4. Interacts with MGAT4B. Post-translationally, O-Glcnacylation regulates the stability of SLC35A3 and the specific complex formation with MGAT4B.

Its subcellular location is the golgi apparatus membrane. The catalysed reaction is UMP(out) + UDP-N-acetyl-alpha-D-glucosamine(in) = UMP(in) + UDP-N-acetyl-alpha-D-glucosamine(out). Its function is as follows. Transports diphosphate-N-acetylglucosamine (UDP-GlcNAc) from the cytosol into the lumen of the Golgi apparatus, functioning as an antiporter that exchanges UDP-N-acetyl-alpha-D-glucosamine for UMP. May supply UDP-GlcNAc as substrate for Golgi-resident glycosyltransferases that generate highly branched, multiantennary complex N-glycans and keratan sulfate. However, the exact role of SLC35A3 still needs to be elucidated, it could be a member of a catalytically more efficient multiprotein complex rather than function independently as a single transporter. In Bos taurus (Bovine), this protein is UDP-N-acetylglucosamine transporter (SLC35A3).